A 359-amino-acid chain; its full sequence is D-alanine--D-alanine ligase (359 aa).

The region spanning 141–346 (KRIFKEAGLP…YSTLLDELIN (206 aa)) is the ATP-grasp domain. Position 172 to 227 (172 to 227 (IEHLGYPCFVKPANLGSSVGITKVHNEEELPGALKLAAKYDRKLLIERGIDAREIE)) interacts with ATP. Mg(2+)-binding residues include Asp-299, Glu-313, and Asn-315.

The protein belongs to the D-alanine--D-alanine ligase family. The cofactor is Mg(2+). Mn(2+) serves as cofactor.

It localises to the cytoplasm. The enzyme catalyses 2 D-alanine + ATP = D-alanyl-D-alanine + ADP + phosphate + H(+). The protein operates within cell wall biogenesis; peptidoglycan biosynthesis. In terms of biological role, cell wall formation. This is D-alanine--D-alanine ligase from Thermoanaerobacter pseudethanolicus (strain ATCC 33223 / 39E) (Clostridium thermohydrosulfuricum).